Here is a 140-residue protein sequence, read N- to C-terminus: MAGLPDRDKLIRNFSRCLNWEEKYLYIIELGGQLAPLTEQQRHPENLISGCQSQVWIAMTLSAEGHVIFAGDSDAAIVKGLVAVVFILYHDLTPQQIVSLDVRPFFADLALSQHLTPSRSQGLEAMIRAIRTKVADLSAH.

The active-site Cysteine persulfide intermediate is the Cys51.

Belongs to the SufE family. As to quaternary structure, homodimer. Interacts with SufS.

It is found in the cytoplasm. The protein operates within cofactor biosynthesis; iron-sulfur cluster biosynthesis. In terms of biological role, participates in cysteine desulfuration mediated by SufS. Cysteine desulfuration mobilizes sulfur from L-cysteine to yield L-alanine and constitutes an essential step in sulfur metabolism for biosynthesis of a variety of sulfur-containing biomolecules. Functions as a sulfur acceptor for SufS, by mediating the direct transfer of the sulfur atom from the S-sulfanylcysteine of SufS, an intermediate product of cysteine desulfuration process. The protein is Cysteine desulfuration protein SufE of Yersinia pseudotuberculosis serotype O:1b (strain IP 31758).